We begin with the raw amino-acid sequence, 111 residues long: MICOS complex subunit MIC13 (111 aa).

A helical membrane pass occupies residues 8 to 26 (VVKFATKVTIAGGALYVAY).

The protein belongs to the MICOS complex subunit Mic13 family. As to quaternary structure, component of the mitochondrial contact site and cristae organizing system (MICOS) complex.

Its subcellular location is the mitochondrion inner membrane. Its function is as follows. Component of the MICOS complex, a large protein complex of the mitochondrial inner membrane that plays crucial roles in the maintenance of crista junctions, inner membrane architecture, and formation of contact sites to the outer membrane. Constituent of mature MICOS complex, it is required for the formation of cristae junction (CJ) and maintenance of cristae morphology. Required for the incorporation of MIC10 into the MICOS complex. This is MICOS complex subunit MIC13 from Danio rerio (Zebrafish).